Here is a 97-residue protein sequence, read N- to C-terminus: Mapk-regulated corepressor-interacting protein 1 (97 aa).

A compositionally biased stretch (polar residues) spans 1–26 (MTSSSTPRMHTYKRTSSPRSPTNTGE). Disordered stretches follow at residues 1 to 27 (MTSSSTPRMHTYKRTSSPRSPTNTGEL) and 54 to 97 (QNHE…SKKS). Composition is skewed to basic and acidic residues over residues 54 to 68 (QNHERNDRGPQEYVE) and 84 to 97 (SDLKKRNTQDSKKS). The short motif at 80 to 84 (PVDLS) is the PXDLS motif element.

The protein belongs to the MCRIP family.

The protein resides in the nucleus. It is found in the cytoplasm. It localises to the stress granule. Its function is as follows. May play a role in the regulation of the epithelial-mesenchymal transition. In Danio rerio (Zebrafish), this protein is Mapk-regulated corepressor-interacting protein 1 (mcrip1).